Here is a 166-residue protein sequence, read N- to C-terminus: Peptide methionine sulfoxide reductase MsrA (166 aa).

Cys-11 is an active-site residue.

The protein belongs to the MsrA Met sulfoxide reductase family.

It catalyses the reaction L-methionyl-[protein] + [thioredoxin]-disulfide + H2O = L-methionyl-(S)-S-oxide-[protein] + [thioredoxin]-dithiol. The enzyme catalyses [thioredoxin]-disulfide + L-methionine + H2O = L-methionine (S)-S-oxide + [thioredoxin]-dithiol. Its function is as follows. Has an important function as a repair enzyme for proteins that have been inactivated by oxidation. Catalyzes the reversible oxidation-reduction of methionine sulfoxide in proteins to methionine. The sequence is that of Peptide methionine sulfoxide reductase MsrA from Lachnoclostridium phytofermentans (strain ATCC 700394 / DSM 18823 / ISDg) (Clostridium phytofermentans).